The primary structure comprises 497 residues: Bifunctional protein GlmU (497 aa).

Residues 1-243 form a pyrophosphorylase region; sequence MTSSTTSSTD…SALVAGVNDR (243 aa). UDP-N-acetyl-alpha-D-glucosamine is bound by residues 16-19, K30, Q87, and 92-93; these read LAAG and GT. D118 contributes to the Mg(2+) binding site. UDP-N-acetyl-alpha-D-glucosamine is bound by residues G153, E168, N183, and N241. Mg(2+) is bound at residue N241. The tract at residues 244 to 264 is linker; the sequence is VQLAALGAELNRRIVTAHQRA. The segment at 265-497 is N-acetyltransferase; that stretch reads GVTVIDPGST…LGHHDDSQGS (233 aa). Positions 346 and 364 each coordinate UDP-N-acetyl-alpha-D-glucosamine. The Proton acceptor role is filled by H376. Positions 379 and 390 each coordinate UDP-N-acetyl-alpha-D-glucosamine. Residues A393, 399 to 400, S418, and A436 each bind acetyl-CoA; that span reads NY. Positions 473–497 are disordered; the sequence is ARAAERASGEAAEQALGHHDDSQGS. Residues 488 to 497 show a composition bias toward basic and acidic residues; that stretch reads LGHHDDSQGS.

This sequence in the N-terminal section; belongs to the N-acetylglucosamine-1-phosphate uridyltransferase family. In the C-terminal section; belongs to the transferase hexapeptide repeat family. As to quaternary structure, homotrimer. The cofactor is Mg(2+).

The protein resides in the cytoplasm. It carries out the reaction alpha-D-glucosamine 1-phosphate + acetyl-CoA = N-acetyl-alpha-D-glucosamine 1-phosphate + CoA + H(+). It catalyses the reaction N-acetyl-alpha-D-glucosamine 1-phosphate + UTP + H(+) = UDP-N-acetyl-alpha-D-glucosamine + diphosphate. The protein operates within nucleotide-sugar biosynthesis; UDP-N-acetyl-alpha-D-glucosamine biosynthesis; N-acetyl-alpha-D-glucosamine 1-phosphate from alpha-D-glucosamine 6-phosphate (route II): step 2/2. It participates in nucleotide-sugar biosynthesis; UDP-N-acetyl-alpha-D-glucosamine biosynthesis; UDP-N-acetyl-alpha-D-glucosamine from N-acetyl-alpha-D-glucosamine 1-phosphate: step 1/1. It functions in the pathway bacterial outer membrane biogenesis; LPS lipid A biosynthesis. Functionally, catalyzes the last two sequential reactions in the de novo biosynthetic pathway for UDP-N-acetylglucosamine (UDP-GlcNAc). The C-terminal domain catalyzes the transfer of acetyl group from acetyl coenzyme A to glucosamine-1-phosphate (GlcN-1-P) to produce N-acetylglucosamine-1-phosphate (GlcNAc-1-P), which is converted into UDP-GlcNAc by the transfer of uridine 5-monophosphate (from uridine 5-triphosphate), a reaction catalyzed by the N-terminal domain. The chain is Bifunctional protein GlmU from Mycobacterium sp. (strain JLS).